We begin with the raw amino-acid sequence, 1118 residues long: Protein translocase subunit SecA (1118 aa).

ATP is bound by residues Q176, 194 to 198 (GEGKT), and D693. Residues 1034-1056 (QQPVQQPKYRETKDEAGSAFGGG) are disordered.

Belongs to the SecA family. As to quaternary structure, monomer and homodimer. Part of the essential Sec protein translocation apparatus which comprises SecA, SecYEG and auxiliary proteins SecDF. Other proteins may also be involved.

Its subcellular location is the cell inner membrane. The protein resides in the cytoplasm. It catalyses the reaction ATP + H2O + cellular proteinSide 1 = ADP + phosphate + cellular proteinSide 2.. Part of the Sec protein translocase complex. Interacts with the SecYEG preprotein conducting channel. Has a central role in coupling the hydrolysis of ATP to the transfer of proteins into and across the cell membrane, serving as an ATP-driven molecular motor driving the stepwise translocation of polypeptide chains across the membrane. In Cytophaga hutchinsonii (strain ATCC 33406 / DSM 1761 / CIP 103989 / NBRC 15051 / NCIMB 9469 / D465), this protein is Protein translocase subunit SecA.